The primary structure comprises 393 residues: NAD(P)H-quinone oxidoreductase subunit H, chloroplastic (393 aa).

It belongs to the complex I 49 kDa subunit family. As to quaternary structure, NDH is composed of at least 16 different subunits, 5 of which are encoded in the nucleus.

The protein localises to the plastid. It is found in the chloroplast thylakoid membrane. It catalyses the reaction a plastoquinone + NADH + (n+1) H(+)(in) = a plastoquinol + NAD(+) + n H(+)(out). The catalysed reaction is a plastoquinone + NADPH + (n+1) H(+)(in) = a plastoquinol + NADP(+) + n H(+)(out). Its function is as follows. NDH shuttles electrons from NAD(P)H:plastoquinone, via FMN and iron-sulfur (Fe-S) centers, to quinones in the photosynthetic chain and possibly in a chloroplast respiratory chain. The immediate electron acceptor for the enzyme in this species is believed to be plastoquinone. Couples the redox reaction to proton translocation, and thus conserves the redox energy in a proton gradient. This chain is NAD(P)H-quinone oxidoreductase subunit H, chloroplastic, found in Nasturtium officinale (Watercress).